The chain runs to 132 residues: DCPSDWSPYGQYCYKFFQQKMNWADAERFCSEQAKGGHLVSFQSDGETDFVVNLVTEKIQSSDLYAWIGLRVQNKEKQCSSKWSDGSSVSYENVVGRTVKKCFALEKEQEFFVWINIYCGQQNPFVCKSPPP.

3 disulfides stabilise this stretch: cysteine 2–cysteine 13, cysteine 30–cysteine 127, and cysteine 102–cysteine 119. The C-type lectin domain maps to tyrosine 9–lysine 128.

This sequence belongs to the snaclec family. Heterodimer of subunits alpha and beta; disulfide-linked. In terms of tissue distribution, expressed by the venom gland.

The protein localises to the secreted. Functionally, thrombin and prothrombin (F2) inhibitor. The IC(50) of thrombin-induced platelet aggregation and fibrinocoagulation is 62 and 35 nM, respectively. Its inhibitory activity is at least 10-fold lower than that observed for other thrombin inhibitors. This chain is Snaclec bothroinsularin subunit alpha, found in Bothrops insularis (Golden lancehead).